We begin with the raw amino-acid sequence, 360 residues long: Malate dehydrogenase (360 aa).

Belongs to the LDH2/MDH2 oxidoreductase family. Homodimer.

It is found in the cytoplasm. It carries out the reaction (S)-malate + NAD(+) = oxaloacetate + NADH + H(+). The protein is Malate dehydrogenase (mdh) of Pyrococcus horikoshii (strain ATCC 700860 / DSM 12428 / JCM 9974 / NBRC 100139 / OT-3).